Consider the following 602-residue polypeptide: Aspartate--tRNA(Asp/Asn) ligase (602 aa).

E187 contacts L-aspartate. The segment at 211–214 is aspartate; sequence QQFK. L-aspartate is bound by residues R233 and H461. Residue 233–235 participates in ATP binding; it reads RDE. Residue E495 coordinates ATP. R502 lines the L-aspartate pocket. Residue 547–550 participates in ATP binding; it reads GLDR.

Belongs to the class-II aminoacyl-tRNA synthetase family. Type 1 subfamily. Homodimer.

The protein localises to the cytoplasm. It carries out the reaction tRNA(Asx) + L-aspartate + ATP = L-aspartyl-tRNA(Asx) + AMP + diphosphate. Its function is as follows. Aspartyl-tRNA synthetase with relaxed tRNA specificity since it is able to aspartylate not only its cognate tRNA(Asp) but also tRNA(Asn). Reaction proceeds in two steps: L-aspartate is first activated by ATP to form Asp-AMP and then transferred to the acceptor end of tRNA(Asp/Asn). The protein is Aspartate--tRNA(Asp/Asn) ligase of Chlorobium phaeovibrioides (strain DSM 265 / 1930) (Prosthecochloris vibrioformis (strain DSM 265)).